Reading from the N-terminus, the 500-residue chain is Protein farnesyltransferase subunit beta (500 aa).

The segment at 117–140 (LQNDDNNGNNNNRENNQNGGGFGG) is disordered. The segment covering 119 to 133 (NDDNNGNNNNRENNQ) has biased composition (low complexity). PFTB repeat units follow at residues 121-162 (DNNG…YVIG), 172-213 (REAM…SMLN), 220-261 (ERGV…SILN), 268-309 (MNSL…IIIQ), and 343-384 (QEYV…SLSQ). (2E,6E)-farnesyl diphosphate is bound by residues 246–249 (HGGY) and 288–291 (RTNK). Residues aspartate 294 and cysteine 296 each coordinate Zn(2+). 297–300 (YSYW) provides a ligand contact to (2E,6E)-farnesyl diphosphate. Histidine 372 is a Zn(2+) binding site. The interval 402-451 (FEQPSPPINKKSTNVFTISNNNNNNNNKNNNSDDNNNNSNNNNNNSENQL) is disordered. The span at 420-449 (SNNNNNNNNKNNNSDDNNNNSNNNNNNSEN) shows a compositional bias: low complexity.

This sequence belongs to the protein prenyltransferase subunit beta family. Heterodimer of fntA and fntB (farnesyltransferase). Heterodimer of an alpha and a beta subunit. Requires Zn(2+) as cofactor.

It carries out the reaction L-cysteinyl-[protein] + (2E,6E)-farnesyl diphosphate = S-(2E,6E)-farnesyl-L-cysteinyl-[protein] + diphosphate. Catalyzes the transfer of a farnesyl moiety from farnesyl diphosphate to a cysteine at the fourth position from the C-terminus of several proteins. The beta subunit is responsible for peptide-binding. The polypeptide is Protein farnesyltransferase subunit beta (fntB) (Dictyostelium discoideum (Social amoeba)).